Here is a 78-residue protein sequence, read N- to C-terminus: Large ribosomal subunit protein bL28 (78 aa).

The tract at residues 1 to 22 is disordered; that stretch reads MSKVCQVTGKRPTTGNNVSHAN. Positions 11-22 are enriched in polar residues; it reads RPTTGNNVSHAN.

This sequence belongs to the bacterial ribosomal protein bL28 family.

This is Large ribosomal subunit protein bL28 from Alkalilimnicola ehrlichii (strain ATCC BAA-1101 / DSM 17681 / MLHE-1).